The chain runs to 156 residues: Phosphopantetheine adenylyltransferase (156 aa).

Thr-9 contacts substrate. ATP contacts are provided by residues 9 to 10 and His-17; that span reads TF. Lys-41, Leu-73, and Arg-87 together coordinate substrate. ATP contacts are provided by residues 88-90, Glu-98, and 123-129; these read GVR and WAFVSST.

This sequence belongs to the bacterial CoaD family. As to quaternary structure, homohexamer. It depends on Mg(2+) as a cofactor.

Its subcellular location is the cytoplasm. The catalysed reaction is (R)-4'-phosphopantetheine + ATP + H(+) = 3'-dephospho-CoA + diphosphate. It functions in the pathway cofactor biosynthesis; coenzyme A biosynthesis; CoA from (R)-pantothenate: step 4/5. Its function is as follows. Reversibly transfers an adenylyl group from ATP to 4'-phosphopantetheine, yielding dephospho-CoA (dPCoA) and pyrophosphate. In Haemophilus influenzae (strain ATCC 51907 / DSM 11121 / KW20 / Rd), this protein is Phosphopantetheine adenylyltransferase.